Here is a 342-residue protein sequence, read N- to C-terminus: Holliday junction branch migration complex subunit RuvB (342 aa).

Residues 1-179 form a large ATPase domain (RuvB-L) region; it reads MTNILSPEKS…FGIPMRLNFY (179 aa). ATP is bound by residues I18, R19, G60, K63, T64, T65, 126 to 128, R169, Y179, and R216; that span reads EDF. T64 contributes to the Mg(2+) binding site. Residues 180-250 form a small ATPAse domain (RuvB-S) region; that stretch reads NTEELKKVLN…ISDFGLKRLE (71 aa). The interval 253-342 is head domain (RuvB-H); the sequence is RIGLDSNDYR…HQFNIFNENE (90 aa). Residues R289, R308, and R313 each contribute to the DNA site.

The protein belongs to the RuvB family. Homohexamer. Forms an RuvA(8)-RuvB(12)-Holliday junction (HJ) complex. HJ DNA is sandwiched between 2 RuvA tetramers; dsDNA enters through RuvA and exits via RuvB. An RuvB hexamer assembles on each DNA strand where it exits the tetramer. Each RuvB hexamer is contacted by two RuvA subunits (via domain III) on 2 adjacent RuvB subunits; this complex drives branch migration. In the full resolvosome a probable DNA-RuvA(4)-RuvB(12)-RuvC(2) complex forms which resolves the HJ.

The protein localises to the cytoplasm. It catalyses the reaction ATP + H2O = ADP + phosphate + H(+). Its function is as follows. The RuvA-RuvB-RuvC complex processes Holliday junction (HJ) DNA during genetic recombination and DNA repair, while the RuvA-RuvB complex plays an important role in the rescue of blocked DNA replication forks via replication fork reversal (RFR). RuvA specifically binds to HJ cruciform DNA, conferring on it an open structure. The RuvB hexamer acts as an ATP-dependent pump, pulling dsDNA into and through the RuvAB complex. RuvB forms 2 homohexamers on either side of HJ DNA bound by 1 or 2 RuvA tetramers; 4 subunits per hexamer contact DNA at a time. Coordinated motions by a converter formed by DNA-disengaged RuvB subunits stimulates ATP hydrolysis and nucleotide exchange. Immobilization of the converter enables RuvB to convert the ATP-contained energy into a lever motion, pulling 2 nucleotides of DNA out of the RuvA tetramer per ATP hydrolyzed, thus driving DNA branch migration. The RuvB motors rotate together with the DNA substrate, which together with the progressing nucleotide cycle form the mechanistic basis for DNA recombination by continuous HJ branch migration. Branch migration allows RuvC to scan DNA until it finds its consensus sequence, where it cleaves and resolves cruciform DNA. In Rickettsia peacockii (strain Rustic), this protein is Holliday junction branch migration complex subunit RuvB.